The primary structure comprises 406 residues: Phosphopentomutase (406 aa).

Mn(2+)-binding residues include Asp10, Asp305, His310, Asp346, His347, and His358.

The protein belongs to the phosphopentomutase family. Mn(2+) serves as cofactor.

Its subcellular location is the cytoplasm. The catalysed reaction is 2-deoxy-alpha-D-ribose 1-phosphate = 2-deoxy-D-ribose 5-phosphate. It catalyses the reaction alpha-D-ribose 1-phosphate = D-ribose 5-phosphate. It functions in the pathway carbohydrate degradation; 2-deoxy-D-ribose 1-phosphate degradation; D-glyceraldehyde 3-phosphate and acetaldehyde from 2-deoxy-alpha-D-ribose 1-phosphate: step 1/2. Functionally, isomerase that catalyzes the conversion of deoxy-ribose 1-phosphate (dRib-1-P) and ribose 1-phosphate (Rib-1-P) to deoxy-ribose 5-phosphate (dRib-5-P) and ribose 5-phosphate (Rib-5-P), respectively. This is Phosphopentomutase from Rhizobium leguminosarum bv. trifolii (strain WSM2304).